Here is a 215-residue protein sequence, read N- to C-terminus: Oligoribonuclease (215 aa).

Residues 5-170 (LVWIDCEMTG…ADIHESIREL (166 aa)) form the Exonuclease domain. The active site involves tyrosine 127.

The protein belongs to the oligoribonuclease family.

Its subcellular location is the cytoplasm. In terms of biological role, 3'-to-5' exoribonuclease specific for small oligoribonucleotides. The protein is Oligoribonuclease of Mycobacterium leprae (strain TN).